A 95-amino-acid chain; its full sequence is Aspartyl/glutamyl-tRNA(Asn/Gln) amidotransferase subunit C (95 aa).

Belongs to the GatC family. As to quaternary structure, heterotrimer of A, B and C subunits.

It catalyses the reaction L-glutamyl-tRNA(Gln) + L-glutamine + ATP + H2O = L-glutaminyl-tRNA(Gln) + L-glutamate + ADP + phosphate + H(+). It carries out the reaction L-aspartyl-tRNA(Asn) + L-glutamine + ATP + H2O = L-asparaginyl-tRNA(Asn) + L-glutamate + ADP + phosphate + 2 H(+). Its function is as follows. Allows the formation of correctly charged Asn-tRNA(Asn) or Gln-tRNA(Gln) through the transamidation of misacylated Asp-tRNA(Asn) or Glu-tRNA(Gln) in organisms which lack either or both of asparaginyl-tRNA or glutaminyl-tRNA synthetases. The reaction takes place in the presence of glutamine and ATP through an activated phospho-Asp-tRNA(Asn) or phospho-Glu-tRNA(Gln). The protein is Aspartyl/glutamyl-tRNA(Asn/Gln) amidotransferase subunit C of Halorhodospira halophila (strain DSM 244 / SL1) (Ectothiorhodospira halophila (strain DSM 244 / SL1)).